Here is a 403-residue protein sequence, read N- to C-terminus: Probable tRNA sulfurtransferase (403 aa).

The THUMP domain occupies 60–165 (QLAEERLKPI…KEGVFLSCRT (106 aa)). ATP is bound by residues 183 to 184 (ML), 208 to 209 (HF), R265, G287, and Q296.

The protein belongs to the ThiI family.

Its subcellular location is the cytoplasm. The enzyme catalyses [ThiI sulfur-carrier protein]-S-sulfanyl-L-cysteine + a uridine in tRNA + 2 reduced [2Fe-2S]-[ferredoxin] + ATP + H(+) = [ThiI sulfur-carrier protein]-L-cysteine + a 4-thiouridine in tRNA + 2 oxidized [2Fe-2S]-[ferredoxin] + AMP + diphosphate. The catalysed reaction is [ThiS sulfur-carrier protein]-C-terminal Gly-Gly-AMP + S-sulfanyl-L-cysteinyl-[cysteine desulfurase] + AH2 = [ThiS sulfur-carrier protein]-C-terminal-Gly-aminoethanethioate + L-cysteinyl-[cysteine desulfurase] + A + AMP + 2 H(+). Its pathway is cofactor biosynthesis; thiamine diphosphate biosynthesis. Catalyzes the ATP-dependent transfer of a sulfur to tRNA to produce 4-thiouridine in position 8 of tRNAs, which functions as a near-UV photosensor. Also catalyzes the transfer of sulfur to the sulfur carrier protein ThiS, forming ThiS-thiocarboxylate. This is a step in the synthesis of thiazole, in the thiamine biosynthesis pathway. The sulfur is donated as persulfide by IscS. This is Probable tRNA sulfurtransferase from Listeria monocytogenes serotype 4a (strain HCC23).